The primary structure comprises 222 residues: Probable mitochondrial import inner membrane translocase subunit Tim17 3 (222 aa).

Transmembrane regions (helical) follow at residues 16-36 (CGCA…LKGF), 60-80 (SIAG…CALV), and 115-135 (ALVG…VATI).

The protein belongs to the Tim17/Tim22/Tim23 family. Component of the TIM23 complex at least composed of Tim23, Tim17 (Tim17a1, Tim17a2 or Tim17b1) and a Tim50. The complex interacts with the Tim44 component of the PAM complex.

It is found in the mitochondrion inner membrane. Essential component of the TIM23 complex, a complex that mediates the translocation of transit peptide-containing proteins across the mitochondrial inner membrane. The sequence is that of Probable mitochondrial import inner membrane translocase subunit Tim17 3 (Tim17a1) from Drosophila melanogaster (Fruit fly).